A 598-amino-acid chain; its full sequence is Aspartate--tRNA(Asp/Asn) ligase (598 aa).

Glu-174 is a binding site for L-aspartate. Residues 198–201 (QQLK) are aspartate. Arg-220 is a binding site for L-aspartate. ATP is bound by residues 220-222 (RDE) and Gln-229. His-458 contacts L-aspartate. Glu-492 is a binding site for ATP. Arg-499 contacts L-aspartate. 544 to 547 (GIDR) contributes to the ATP binding site.

This sequence belongs to the class-II aminoacyl-tRNA synthetase family. Type 1 subfamily. In terms of assembly, homodimer.

The protein localises to the cytoplasm. The catalysed reaction is tRNA(Asx) + L-aspartate + ATP = L-aspartyl-tRNA(Asx) + AMP + diphosphate. Its function is as follows. Aspartyl-tRNA synthetase with relaxed tRNA specificity since it is able to aspartylate not only its cognate tRNA(Asp) but also tRNA(Asn). Reaction proceeds in two steps: L-aspartate is first activated by ATP to form Asp-AMP and then transferred to the acceptor end of tRNA(Asp/Asn). The polypeptide is Aspartate--tRNA(Asp/Asn) ligase (Dehalococcoides mccartyi (strain CBDB1)).